A 463-amino-acid polypeptide reads, in one-letter code: Glutamate--tRNA ligase 2 (463 aa).

The 'HIGH' region signature appears at 11–21 (PSPTGYLHIGG). Residues 240–244 (KLSKR) carry the 'KMSKS' region motif. Lys-243 lines the ATP pocket.

Belongs to the class-I aminoacyl-tRNA synthetase family. Glutamate--tRNA ligase type 1 subfamily. Monomer.

The protein localises to the cytoplasm. It carries out the reaction tRNA(Glu) + L-glutamate + ATP = L-glutamyl-tRNA(Glu) + AMP + diphosphate. In terms of biological role, catalyzes the attachment of glutamate to tRNA(Glu) in a two-step reaction: glutamate is first activated by ATP to form Glu-AMP and then transferred to the acceptor end of tRNA(Glu). In Campylobacter jejuni subsp. jejuni serotype O:2 (strain ATCC 700819 / NCTC 11168), this protein is Glutamate--tRNA ligase 2.